A 233-amino-acid chain; its full sequence is Orotidine 5'-phosphate decarboxylase (233 aa).

Substrate contacts are provided by residues Asp11, Lys33, 60 to 69 (DLKFHDIPNT), Thr120, Arg181, Gln190, Gly210, and Arg211. Residue Lys62 is the Proton donor of the active site.

Belongs to the OMP decarboxylase family. Type 1 subfamily. As to quaternary structure, homodimer.

The catalysed reaction is orotidine 5'-phosphate + H(+) = UMP + CO2. It participates in pyrimidine metabolism; UMP biosynthesis via de novo pathway; UMP from orotate: step 2/2. Its function is as follows. Catalyzes the decarboxylation of orotidine 5'-monophosphate (OMP) to uridine 5'-monophosphate (UMP). This is Orotidine 5'-phosphate decarboxylase from Vibrio parahaemolyticus serotype O3:K6 (strain RIMD 2210633).